A 60-amino-acid polypeptide reads, in one-letter code: Mastoparan-VT6 (60 aa).

The signal sequence occupies residues 1–27; it reads MKNTILILFTAFIALLGFFGMSAEALA. AXPX repeat units lie at residues 27–30, 31–34, 35–38, and 41–44; these read ADPK, ADPL, AGPN, and ADPE. A propeptide spanning residues 28–45 is cleaved from the precursor; the sequence is DPKADPLAGPNPDADPEA. L59 carries the leucine amide modification.

This sequence belongs to the MCD family. Mastoparan subfamily. In terms of tissue distribution, expressed by the venom gland.

It localises to the secreted. In terms of biological role, the synthetic peptide shows antimicrobial activities against Gram-negative bacteria (but not against all strains tested), Gram-positive bacteria (all strains tested) and the fungi C.albicans and C.parapsilosis. Exhibits little hemolytic activity against washed human erythrocytes. This is Mastoparan-VT6 from Vespa tropica (Greater banded hornet).